Reading from the N-terminus, the 528-residue chain is Glucose-6-phosphate isomerase (528 aa).

The active-site Proton donor is Glu-322. Residues His-351 and Lys-455 contribute to the active site.

It belongs to the GPI family.

The protein resides in the cytoplasm. It carries out the reaction alpha-D-glucose 6-phosphate = beta-D-fructose 6-phosphate. The protein operates within carbohydrate biosynthesis; gluconeogenesis. Its pathway is carbohydrate degradation; glycolysis; D-glyceraldehyde 3-phosphate and glycerone phosphate from D-glucose: step 2/4. Catalyzes the reversible isomerization of glucose-6-phosphate to fructose-6-phosphate. This Nostoc sp. (strain PCC 7120 / SAG 25.82 / UTEX 2576) protein is Glucose-6-phosphate isomerase.